The primary structure comprises 380 residues: O-methyltransferase ucdC (380 aa).

S-adenosyl-L-methionine is bound by residues 222-223 (GG), Asp-247, and Arg-283. Residue His-287 is the Proton acceptor of the active site.

The protein belongs to the class I-like SAM-binding methyltransferase superfamily. Cation-independent O-methyltransferase family. COMT subfamily.

The protein operates within secondary metabolite biosynthesis. Functionally, nonribosomal peptide synthetase that mediates the biosynthesis of usterphenyllins and uscandidusins, p-terphenyl derivatives. Within the pathway, ucdC catalyzes O-methylation of the terphenyl triol intermediate produced by ucdB to yield terphenyllin carrying two methoxy moieties at C-9 and C-12. The pathway begin with the biosynthesis of 4-hydroxyphenylpyruvate (HPPA) from L-tyrosine, possibly by the aminotransferase ucdG. The nonribosomal peptide synthetase ucdA then condenses two HPPA units to produce atromentin. The key step in this pathway is the reduction and dehydration of atromentin to form a terphenyl triol intermediate, performed by the NAD-dependent dehydrogenase ucdB. Further O-methylation by the methyltransferase ucdC forms terphenyllin carrying two methoxy moieties at C-9 and C-12, and subsequent dihydroxylation at C-3 of ring A and C-15 of ring C by the flavin-dependent oxygenase ucdD leads to 3,15-dihydroxyterphenyllin. Prenylation by ucdE at position C-5 of ring A forms usterphenyllin B, and is followed by a second prenylation at position C-14 of ring C to form usterphenyllin A. The following furan ring formation that leads to uscandidusins A and B was proven to be an unexpected spontaneous non-enzymatic reaction. The sequence is that of O-methyltransferase ucdC from Aspergillus ustus.